Here is a 746-residue protein sequence, read N- to C-terminus: Long-chain-alcohol oxidase FAO3 (746 aa).

A helical transmembrane segment spans residues 139 to 159 (ILTPIRAAFVYIKVAFLFCFF). 233 to 248 (CDVVVVGSGSGGGVAA) provides a ligand contact to FAD. The Proton acceptor role is filled by histidine 677.

This sequence belongs to the GMC oxidoreductase family.

Its subcellular location is the membrane. The catalysed reaction is a long-chain primary fatty alcohol + O2 = a long-chain fatty aldehyde + H2O2. Its function is as follows. Long-chain fatty alcohol oxidase involved in the omega-oxidation pathway of lipid degradation. The protein is Long-chain-alcohol oxidase FAO3 (FAO3) of Arabidopsis thaliana (Mouse-ear cress).